Consider the following 379-residue polypeptide: Lipoyl synthase 2, mitochondrial (379 aa).

[4Fe-4S] cluster contacts are provided by cysteine 106, cysteine 111, cysteine 117, cysteine 137, cysteine 141, cysteine 144, and serine 352. The 220-residue stretch at 122 to 341 folds into the Radical SAM core domain; sequence EHGTQTATIM…EERGNELGFL (220 aa).

It belongs to the radical SAM superfamily. Lipoyl synthase family. It depends on [4Fe-4S] cluster as a cofactor.

It localises to the mitochondrion. The catalysed reaction is [[Fe-S] cluster scaffold protein carrying a second [4Fe-4S](2+) cluster] + N(6)-octanoyl-L-lysyl-[protein] + 2 oxidized [2Fe-2S]-[ferredoxin] + 2 S-adenosyl-L-methionine + 4 H(+) = [[Fe-S] cluster scaffold protein] + N(6)-[(R)-dihydrolipoyl]-L-lysyl-[protein] + 4 Fe(3+) + 2 hydrogen sulfide + 2 5'-deoxyadenosine + 2 L-methionine + 2 reduced [2Fe-2S]-[ferredoxin]. Its pathway is protein modification; protein lipoylation via endogenous pathway; protein N(6)-(lipoyl)lysine from octanoyl-[acyl-carrier-protein]: step 2/2. Catalyzes the radical-mediated insertion of two sulfur atoms into the C-6 and C-8 positions of the octanoyl moiety bound to the lipoyl domains of lipoate-dependent enzymes, thereby converting the octanoylated domains into lipoylated derivatives. The protein is Lipoyl synthase 2, mitochondrial of Drosophila yakuba (Fruit fly).